The sequence spans 185 residues: Ribosome-recycling factor (185 aa).

The protein belongs to the RRF family.

It localises to the cytoplasm. Its function is as follows. Responsible for the release of ribosomes from messenger RNA at the termination of protein biosynthesis. May increase the efficiency of translation by recycling ribosomes from one round of translation to another. This chain is Ribosome-recycling factor, found in Wigglesworthia glossinidia brevipalpis.